The primary structure comprises 257 residues: Outer dense fiber protein 4 (257 aa).

The disordered stretch occupies residues 1 to 41 (MDAEYSGNEFPRSEGERDQHQRPGKERKSGEAGWGTGELGQ). The span at 11–30 (PRSEGERDQHQRPGKERKSG) shows a compositional bias: basic and acidic residues. Residue Ser-64 is modified to Phosphoserine. 3 helical membrane passes run 80–100 (AQVLASELSLVAFILLLVVAF), 152–172 (VTFIFSTLMLFPINIWIFELE), and 179–199 (IGWSYFIGWLVLILYFTCAIL).

In terms of tissue distribution, expressed in testis and sperm; especially localized to sperm tail (at protein level).

It localises to the membrane. Component of the outer dense fibers (ODF) of spermatozoa which could be involved in sperm tail structure, sperm movement and general organization of cellular cytoskeleton. The protein is Outer dense fiber protein 4 (ODF4) of Homo sapiens (Human).